A 432-amino-acid chain; its full sequence is Alkaline protease secretion protein AprE (432 aa).

The Cytoplasmic segment spans residues 1 to 14 (MTRTVKRDENAYAR). Residues 15–36 (LGWLLVLFGFGGALLWAAFAPL) form a helical membrane-spanning segment. Over 37 to 432 (DQGVAVPATV…DRAHVALAEN (396 aa)) the chain is Periplasmic.

It belongs to the membrane fusion protein (MFP) (TC 8.A.1) family.

It is found in the cell inner membrane. Involved in the secretion of alkaline protease. The protein is Alkaline protease secretion protein AprE (aprE) of Pseudomonas aeruginosa (strain ATCC 15692 / DSM 22644 / CIP 104116 / JCM 14847 / LMG 12228 / 1C / PRS 101 / PAO1).